The following is a 442-amino-acid chain: Amino-acid acetyltransferase (442 aa).

An N-acetyltransferase domain is found at 295-442 (EQARAATIED…RSKVLSKTIS (148 aa)).

This sequence belongs to the acetyltransferase family. ArgA subfamily.

It is found in the cytoplasm. The enzyme catalyses L-glutamate + acetyl-CoA = N-acetyl-L-glutamate + CoA + H(+). The protein operates within amino-acid biosynthesis; L-arginine biosynthesis; N(2)-acetyl-L-ornithine from L-glutamate: step 1/4. The polypeptide is Amino-acid acetyltransferase (Aeromonas salmonicida (strain A449)).